The primary structure comprises 29 residues: Cyclotide mobo-A (29 aa).

Positions 1–29 form a cross-link, cyclopeptide (Gly-Asn); it reads GFPTCGETCTLGTCNTPGCTCSWPICTRN. Disulfide bonds link Cys-5/Cys-19, Cys-9/Cys-21, and Cys-14/Cys-26.

The protein belongs to the cyclotide family. Moebius subfamily. Post-translationally, this is a cyclic peptide.

Its function is as follows. Probably participates in a plant defense mechanism. In Melicytus obovatus (Hymenanthera obovata), this protein is Cyclotide mobo-A.